Consider the following 259-residue polypeptide: Polycomb group RING finger protein 1 (259 aa).

N-acetylalanine is present on Ala2. Position 3 is a phosphoserine (Ser3). Lys24 participates in a covalent cross-link: Glycyl lysine isopeptide (Lys-Gly) (interchain with G-Cter in SUMO2). The segment at 47 to 86 (CCLCAGYFVDATTITECLHTFCKSCIVKYLQTSKYCPMCN) adopts an RING-type zinc-finger fold. Residues 86–247 (NIKIHETQPL…LSRWFGKPSP (162 aa)) form a required for repressor activity region. Lys88 participates in a covalent cross-link: Glycyl lysine isopeptide (Lys-Gly) (interchain with G-Cter in SUMO2). Positions 150 to 255 (LPFSSFDHSK…SPLLLQYSVK (106 aa)) are required for the interaction with the KDM2B-SKP1 heterodimeric complex. The interval 167–255 (EQLNLCLERL…SPLLLQYSVK (89 aa)) is RING-finger and WD40-associated ubiquitin-like domain (RAWUL); sufficient for interaction with BCOR and BCORL1.

As to quaternary structure, interacts with BCORL1, forming heterodimers. The PCGF1-BCORL1 heterodimeric complex interacts with the KDM2B-SKP1 heterodimeric complex to form a homotetrameric polycomb repression complex 1 (PRC1.1). Component of the repressive BCOR complex containing a Polycomb group subcomplex at least composed of RYBP, RING1 and RNF2/RING2. Specifically interacts with BCOR, RING1 and RNF2/RING2. Component of a PRC1-like complex. Interacts with CBX6, CBX7 and CBX8. Interacts with DPPA4, NANOG, POU5F1 and RYBP. In terms of tissue distribution, ubiquitous.

The protein resides in the nucleus. Its function is as follows. Component of the Polycomb group (PcG) multiprotein BCOR complex, a complex required to maintain the transcriptionally repressive state of some genes, such as BCL6 and the cyclin-dependent kinase inhibitor, CDKN1A. Transcriptional repressor that may be targeted to the DNA by BCL6; this transcription repressor activity may be related to PKC signaling pathway. Represses CDKN1A expression by binding to its promoter, and this repression is dependent on the retinoic acid response element (RARE element). Promotes cell cycle progression and enhances cell proliferation as well. May have a positive role in tumor cell growth by down-regulating CDKN1A. Component of a Polycomb group (PcG) multiprotein PRC1-like complex, a complex class required to maintain the transcriptionally repressive state of many genes, including Hox genes, throughout development. PcG PRC1 complex acts via chromatin remodeling and modification of histones; it mediates monoubiquitination of histone H2A 'Lys-119', rendering chromatin heritably changed in its expressibility. Within the PRC1-like complex, regulates RNF2 ubiquitin ligase activity. Regulates the expression of DPPA4 and NANOG in the NT2 embryonic carcinoma cells. This chain is Polycomb group RING finger protein 1 (PCGF1), found in Homo sapiens (Human).